The following is a 73-amino-acid chain: Large ribosomal subunit protein bL31 (73 aa).

The protein belongs to the bacterial ribosomal protein bL31 family. Type A subfamily. As to quaternary structure, part of the 50S ribosomal subunit.

Binds the 23S rRNA. In Rhizobium etli (strain CIAT 652), this protein is Large ribosomal subunit protein bL31.